The primary structure comprises 80 residues: Sec-independent protein translocase protein TatA (80 aa).

The chain crosses the membrane as a helical span at residues 1 to 21 (MGQIGIWQILIIALVILVLFG). Residues 38 to 80 (SFKKGLNEEDKPAEPAAKIEGPSHEAKPAGEAAKDPRPADKQG) form a disordered region. Positions 58 to 80 (GPSHEAKPAGEAAKDPRPADKQG) are enriched in basic and acidic residues.

It belongs to the TatA/E family. As to quaternary structure, the Tat system comprises two distinct complexes: a TatABC complex, containing multiple copies of TatA, TatB and TatC subunits, and a separate TatA complex, containing only TatA subunits. Substrates initially bind to the TatABC complex, which probably triggers association of the separate TatA complex to form the active translocon.

It is found in the cell inner membrane. In terms of biological role, part of the twin-arginine translocation (Tat) system that transports large folded proteins containing a characteristic twin-arginine motif in their signal peptide across membranes. TatA could form the protein-conducting channel of the Tat system. The polypeptide is Sec-independent protein translocase protein TatA (Erythrobacter litoralis (strain HTCC2594)).